Consider the following 167-residue polypeptide: uncharacterized protein (167 aa).

A divalent metal cation is bound by residues His-48, His-127, and His-131.

It belongs to the DinB family.

This is an uncharacterized protein from Bacillus subtilis (strain 168).